A 147-amino-acid polypeptide reads, in one-letter code: MVHFTAEEKAAVTSLWSKMNVEEAGGEALGRLLVVYPWTQRFFDSFGNLSSPSAILGNPKVKAHGKKVLTSFGDAIKNMDNLKTTFAKLSELHCDKLHVDPENFKLLGNVMVIILATHFGKEFTPEVQAAWQKLVSAVAIALAHKYH.

One can recognise a Globin domain in the interval 3–147; the sequence is HFTAEEKAAV…VAIALAHKYH (145 aa). 2 positions are modified to phosphoserine: S14 and S51. Heme b-binding residues include H64 and H93.

This sequence belongs to the globin family. In terms of assembly, heterotetramer of two alpha chains and two epsilon chains in early embryonic hemoglobin Gower-2; two zeta chains and two epsilon chains in early embryonic hemoglobin Gower-1. Red blood cells.

The epsilon chain is a beta-type chain of early mammalian embryonic hemoglobin. The chain is Hemoglobin subunit epsilon (HBE1) from Pongo pygmaeus (Bornean orangutan).